A 280-amino-acid chain; its full sequence is 30 kDa immediate-early protein 2 (280 aa).

Positions 36-164 (SEEEQGEEVE…KKSKRISELD (129 aa)) are disordered. Low complexity-rich tracts occupy residues 47–67 (RGATASSPSTGSGTPRVTSPT), 90–101 (SSSSSSCSSASD), and 132–147 (AASSSLLSCGHQSSGG).

Its function is as follows. Activates the E1.7 promoter. This activation is augmented by the IE1 protein. It down-regulates the transcription of genes under the control of the major IE promoter. This is 30 kDa immediate-early protein 2 (UL122) from Human cytomegalovirus (strain Towne) (HHV-5).